The primary structure comprises 310 residues: Membrane protein insertase YidC 2 (310 aa).

An N-terminal signal peptide occupies residues 1 to 23; that stretch reads MKKTLKRILFSSLSLSMLLLLTG. Cysteine 24 carries N-palmitoyl cysteine lipidation. A lipid anchor (S-diacylglycerol cysteine) is attached at cysteine 24. The next 5 membrane-spanning stretches (helical) occupy residues 33 to 53, 58 to 78, 135 to 155, 180 to 200, and 219 to 239; these read PYGVIWNTLGVPMANLITYFA, LGFGVAIIIVTVIVRVVILPL, FGGIGCLPLLIQMPFFSAIFF, LTVIIAILYFVQSWLSMQGVP, and VFMSISLPASVALYWFIGGIF. The segment at 266 to 310 is disordered; the sequence is NPPKAYKANNARKDVTNSTKATESNQAIITSKKTNRNAGKQKRRG. Positions 281 to 297 are enriched in polar residues; it reads TNSTKATESNQAIITSK. Over residues 298–310 the composition is skewed to basic residues; the sequence is KTNRNAGKQKRRG.

Belongs to the OXA1/ALB3/YidC family. Type 2 subfamily.

The protein localises to the cell membrane. Required for the insertion and/or proper folding and/or complex formation of integral membrane proteins into the membrane. Involved in integration of membrane proteins that insert both dependently and independently of the Sec translocase complex, as well as at least some lipoproteins. This Streptococcus agalactiae serotype V (strain ATCC BAA-611 / 2603 V/R) protein is Membrane protein insertase YidC 2.